Consider the following 512-residue polypeptide: Serine--tRNA ligase, cytoplasmic (512 aa).

Met1 bears the N-acetylmethionine mark. The interaction with tRNA stretch occupies residues 9-61 (RVDKGGDPALIRETQEKRFKDPGLVDQLVKADSEWRRCRFRADNLNKLKNLCS). Position 241 is a phosphoserine (Ser241). L-serine is bound by residues Thr271 and Arg302. ATP-binding positions include 302–304 (RQE) and 318–321 (VHQF). Lys323 is subject to N6-acetyllysine. Glu325 lines the L-serine pocket. 391 to 394 (ELVS) is a binding site for ATP. Residue Asn427 participates in L-serine binding. Positions 470-512 (FVKPAPIDQEPSKKQKKQHEGSKKKAKEVPLENQLQSMEVTEA) are disordered. The span at 479 to 499 (EPSKKQKKQHEGSKKKAKEVP) shows a compositional bias: basic and acidic residues. Positions 482–494 (KKQKKQHEGSKKK) match the Nuclear localization signal motif. The span at 502–512 (NQLQSMEVTEA) shows a compositional bias: polar residues. Ser506 carries the post-translational modification Phosphoserine.

The protein belongs to the class-II aminoacyl-tRNA synthetase family. Type-1 seryl-tRNA synthetase subfamily. Homodimer. The tRNA molecule may bind across the dimer. Interacts with SIRT2. Interacts with METTL6; interaction is required for the tRNA N(3)-methylcytidine methyltransferase activity of METTL6.

The protein localises to the cytoplasm. It localises to the nucleus. The catalysed reaction is tRNA(Ser) + L-serine + ATP = L-seryl-tRNA(Ser) + AMP + diphosphate + H(+). The enzyme catalyses tRNA(Sec) + L-serine + ATP = L-seryl-tRNA(Sec) + AMP + diphosphate + H(+). It functions in the pathway aminoacyl-tRNA biosynthesis; selenocysteinyl-tRNA(Sec) biosynthesis; L-seryl-tRNA(Sec) from L-serine and tRNA(Sec): step 1/1. In terms of biological role, catalyzes the attachment of serine to tRNA(Ser) in a two-step reaction: serine is first activated by ATP to form Ser-AMP and then transferred to the acceptor end of tRNA(Ser). Is probably also able to aminoacylate tRNA(Sec) with serine, to form the misacylated tRNA L-seryl-tRNA(Sec), which will be further converted into selenocysteinyl-tRNA(Sec). In the nucleus, binds to the VEGFA core promoter and prevents MYC binding and transcriptional activation by MYC. Recruits SIRT2 to the VEGFA promoter, promoting deacetylation of histone H4 at 'Lys-16' (H4K16). Thereby, inhibits the production of VEGFA and sprouting angiogenesis mediated by VEGFA. The chain is Serine--tRNA ligase, cytoplasmic (Sars1) from Mus musculus (Mouse).